Here is a 114-residue protein sequence, read N- to C-terminus: UPF0342 protein LCA_0622 (114 aa).

Belongs to the UPF0342 family.

This is UPF0342 protein LCA_0622 from Latilactobacillus sakei subsp. sakei (strain 23K) (Lactobacillus sakei subsp. sakei).